A 178-amino-acid polypeptide reads, in one-letter code: Protein GrpE (178 aa).

Belongs to the GrpE family. In terms of assembly, homodimer.

Its subcellular location is the cytoplasm. Participates actively in the response to hyperosmotic and heat shock by preventing the aggregation of stress-denatured proteins, in association with DnaK and GrpE. It is the nucleotide exchange factor for DnaK and may function as a thermosensor. Unfolded proteins bind initially to DnaJ; upon interaction with the DnaJ-bound protein, DnaK hydrolyzes its bound ATP, resulting in the formation of a stable complex. GrpE releases ADP from DnaK; ATP binding to DnaK triggers the release of the substrate protein, thus completing the reaction cycle. Several rounds of ATP-dependent interactions between DnaJ, DnaK and GrpE are required for fully efficient folding. This chain is Protein GrpE, found in Rickettsia africae (strain ESF-5).